A 428-amino-acid polypeptide reads, in one-letter code: UDP-N-acetylglucosamine 1-carboxyvinyltransferase 2 (428 aa).

22-23 contacts phosphoenolpyruvate; sequence KN. Arg-92 serves as a coordination point for UDP-N-acetyl-alpha-D-glucosamine. The Proton donor role is filled by Cys-116. Cys-116 carries the post-translational modification 2-(S-cysteinyl)pyruvic acid O-phosphothioketal. Residues 121 to 125, Asp-304, and Ile-326 each bind UDP-N-acetyl-alpha-D-glucosamine; that span reads RPIDQ.

Belongs to the EPSP synthase family. MurA subfamily.

It is found in the cytoplasm. It carries out the reaction phosphoenolpyruvate + UDP-N-acetyl-alpha-D-glucosamine = UDP-N-acetyl-3-O-(1-carboxyvinyl)-alpha-D-glucosamine + phosphate. It functions in the pathway cell wall biogenesis; peptidoglycan biosynthesis. Functionally, cell wall formation. Adds enolpyruvyl to UDP-N-acetylglucosamine. This Shouchella clausii (strain KSM-K16) (Alkalihalobacillus clausii) protein is UDP-N-acetylglucosamine 1-carboxyvinyltransferase 2.